The primary structure comprises 365 residues: Peptide chain release factor 2 (365 aa).

Position 252 is an N5-methylglutamine (Gln-252).

The protein belongs to the prokaryotic/mitochondrial release factor family. In terms of processing, methylated by PrmC. Methylation increases the termination efficiency of RF2.

It is found in the cytoplasm. In terms of biological role, peptide chain release factor 2 directs the termination of translation in response to the peptide chain termination codons UGA and UAA. The chain is Peptide chain release factor 2 from Escherichia coli O9:H4 (strain HS).